Reading from the N-terminus, the 60-residue chain is Large ribosomal subunit protein uL30 (60 aa).

Belongs to the universal ribosomal protein uL30 family. Part of the 50S ribosomal subunit.

The sequence is that of Large ribosomal subunit protein uL30 from Streptomyces coelicolor (strain ATCC BAA-471 / A3(2) / M145).